Consider the following 88-residue polypeptide: Small ribosomal subunit protein bS16 (88 aa).

It belongs to the bacterial ribosomal protein bS16 family.

This Buchnera aphidicola subsp. Cinara cedri (strain Cc) protein is Small ribosomal subunit protein bS16.